The sequence spans 516 residues: tRNA-2-methylthio-N(6)-dimethylallyladenosine synthase (516 aa).

Residues 17–133 (RSFEVRTFGC…LPSLLSRSEH (117 aa)) form the MTTase N-terminal domain. Residues C26, C62, C96, C170, C174, and C177 each contribute to the [4Fe-4S] cluster site. The Radical SAM core domain occupies 156 to 392 (RESAYAGWVS…LALQERISTE (237 aa)). The TRAM domain occupies 395-466 (AKLIGTEVEL…PFFLIADSGV (72 aa)). 2 disordered regions span residues 409 to 438 (SGGR…QGHV) and 492 to 516 (GLGL…GCGC). A compositionally biased stretch (basic and acidic residues) spans 412 to 438 (RKNDKTQRMTGRSRDGRLVHFDPQGHV).

It belongs to the methylthiotransferase family. MiaB subfamily. As to quaternary structure, monomer. [4Fe-4S] cluster serves as cofactor.

The protein localises to the cytoplasm. It catalyses the reaction N(6)-dimethylallyladenosine(37) in tRNA + (sulfur carrier)-SH + AH2 + 2 S-adenosyl-L-methionine = 2-methylsulfanyl-N(6)-dimethylallyladenosine(37) in tRNA + (sulfur carrier)-H + 5'-deoxyadenosine + L-methionine + A + S-adenosyl-L-homocysteine + 2 H(+). In terms of biological role, catalyzes the methylthiolation of N6-(dimethylallyl)adenosine (i(6)A), leading to the formation of 2-methylthio-N6-(dimethylallyl)adenosine (ms(2)i(6)A) at position 37 in tRNAs that read codons beginning with uridine. This Corynebacterium diphtheriae (strain ATCC 700971 / NCTC 13129 / Biotype gravis) protein is tRNA-2-methylthio-N(6)-dimethylallyladenosine synthase.